Consider the following 428-residue polypeptide: UPF0229 protein YeaH (428 aa).

The span at 77 to 90 shows a compositional bias: basic and acidic residues; sequence PGNDHFIQNDRIER. The disordered stretch occupies residues 77 to 111; sequence PGNDHFIQNDRIERPQSGGGGGSGSGQGQASQDGE. A compositionally biased stretch (gly residues) spans 93–103; sequence SGGGGGSGSGQ.

This sequence belongs to the UPF0229 family.

The polypeptide is UPF0229 protein YeaH (Salmonella typhi).